A 175-amino-acid polypeptide reads, in one-letter code: Trafficking protein particle complex subunit 20 (175 aa).

This sequence belongs to the TRAPP small subunits family. Sedlin subfamily. Part of the multisubunit TRAPP (transport protein particle) I complex composed of BET3, BET5, TRS20, TRS23, TRS31 and TRS33. Part of the multisubunit TRAPP (transport protein particle) II complex composed of BET3, BET5, TRS20, TRS23, TRS31, TRS33, TRS65, TRS85, TRS120 and TRS130. Part of the multisubunit TRAPP (transport protein particle) III complex composed of BET3, BET5, TRS20, TRS23, TRS31, TRS33 and TRS85.

The protein localises to the golgi apparatus. Its subcellular location is the cis-Golgi network. The protein resides in the endoplasmic reticulum. It is found in the preautophagosomal structure. Component of the TRAPP I, TRAPP II and TRAPP III complexes which act as guanine nucleotide exchange factors (GEF) for YPT1. TRAPP I plays a key role in the late stages of endoplasmic reticulum to Golgi traffic. TRAPP II plays a role in intra-Golgi transport. TRAPP III plays a role in autophagosome formation. This chain is Trafficking protein particle complex subunit 20 (TRS20), found in Saccharomyces cerevisiae (strain ATCC 204508 / S288c) (Baker's yeast).